Here is a 1158-residue protein sequence, read N- to C-terminus: Putative HERC2-like protein 3 (1158 aa).

Positions 281–302 are disordered; sequence PRKKRVPKKPESTDDEEKIGNE. The segment covering 293–302 has biased composition (acidic residues); the sequence is TDDEEKIGNE. The MIB/HERC2 domain maps to 587 to 660; it reads SGPELAAMMK…NYDLKLAELP (74 aa). A disordered region spans residues 662–684; the sequence is PAQPSAEDSDTEDDSEAEQTERN. Residues 668 to 679 show a composition bias toward acidic residues; sequence EDSDTEDDSEAE.

In Homo sapiens (Human), this protein is Putative HERC2-like protein 3 (HERC2P3).